Consider the following 466-residue polypeptide: MIRRPIYDFAAVFRHLTSPLSTSSRFLFYSSSEHEARKPIVSNPKSPIGSPTRVQKLIASQSDPLLAKEIFDYASQQPNFRHSRSSHLILILKLGRGRYFNLIDDVLAKHRSSGYPLTGEIFTYLIKVYAEAKLPEKVLSTFYKMLEFNFTPQPKHLNRILDVLVSHRGYLQKAFELFKSSRLHGVMPNTRSYNLLMQAFCLNDDLSIAYQLFGKMLERDVVPDVDSYKILIQGFCRKGQVNGAMELLDDMLNKGFVPDRLSYTTLLNSLCRKTQLREAYKLLCRMKLKGCNPDLVHYNTMILGFCREDRAMDARKVLDDMLSNGCSPNSVSYRTLIGGLCDQGMFDEGKKYLEEMISKGFSPHFSVSNCLVKGFCSFGKVEEACDVVEVVMKNGETLHSDTWEMVIPLICNEDESEKIKLFLEDAVKEEITGDTRIVDVGIGLGSYLSSKLQMKRKNARERRRHL.

The transit peptide at M1–H34 directs the protein to the mitochondrion. PPR repeat units follow at residues T118 to P152, Q153 to P188, N189 to P223, D224 to P258, D259 to P293, D294 to P328, N329 to P363, and H364 to L398.

Belongs to the PPR family. P subfamily.

It is found in the mitochondrion. The chain is Pentatricopeptide repeat-containing protein At4g01400, mitochondrial from Arabidopsis thaliana (Mouse-ear cress).